We begin with the raw amino-acid sequence, 694 residues long: DNA-directed RNA polymerase subunit beta' (694 aa).

Zn(2+) is bound by residues Cys-69, Cys-71, Cys-87, and Cys-90. The Mg(2+) site is built by Asp-489, Asp-491, and Asp-493.

It belongs to the RNA polymerase beta' chain family. RpoC1 subfamily. In plastids the minimal PEP RNA polymerase catalytic core is composed of four subunits: alpha, beta, beta', and beta''. When a (nuclear-encoded) sigma factor is associated with the core the holoenzyme is formed, which can initiate transcription. Mg(2+) serves as cofactor. Zn(2+) is required as a cofactor.

Its subcellular location is the plastid. It is found in the chloroplast. It carries out the reaction RNA(n) + a ribonucleoside 5'-triphosphate = RNA(n+1) + diphosphate. In terms of biological role, DNA-dependent RNA polymerase catalyzes the transcription of DNA into RNA using the four ribonucleoside triphosphates as substrates. This Gossypium barbadense (Sea Island cotton) protein is DNA-directed RNA polymerase subunit beta'.